A 522-amino-acid chain; its full sequence is Sensory neuron membrane protein 1 (522 aa).

The Cytoplasmic portion of the chain corresponds to 1–11 (MQLAKPLKYAA). A helical membrane pass occupies residues 12–32 (ISGIVAFVGLMFGWVIFPAIL). Over 33 to 458 (KSQLKKEMAL…SQLFIPKRVV (426 aa)) the chain is Extracellular. Asparagine 67, asparagine 105, and asparagine 229 each carry an N-linked (GlcNAc...) asparagine glycan. Cystine bridges form between cysteine 268-cysteine 333, cysteine 297-cysteine 352, and cysteine 335-cysteine 341. Asparagine 440 is a glycosylation site (N-linked (GlcNAc...) asparagine). Residues 459 to 479 (SVVCWCMISFGSLGVIAAVIF) form a helical membrane-spanning segment. Topologically, residues 480–522 (HFKGDIMHLAVAGDNSVSKIKPENDENKEVGVMGQNQEPAKVM) are cytoplasmic. The segment at 500 to 522 (KPENDENKEVGVMGQNQEPAKVM) is disordered. Polar residues predominate over residues 513–522 (GQNQEPAKVM).

The protein belongs to the CD36 family. As to expression, principal component of the olfactory cilia membrane. Detected in both male and female antennae but not present in leg, abdomen, thorax or head.

It localises to the cell membrane. In terms of biological role, plays an olfactory role that is not restricted to pheromone sensitivity. The protein is Sensory neuron membrane protein 1 of Bombyx mori (Silk moth).